A 253-amino-acid polypeptide reads, in one-letter code: Phosphoglycerate mutase 2 (253 aa).

A Phosphothreonine modification is found at Thr-3. Residues 10–17 (RHGESTWN), 23–24 (CG), Arg-62, 89–92 (ERHY), Lys-100, and 116–117 (RR) contribute to the substrate site. His-11 (tele-phosphohistidine intermediate) is an active-site residue. Ser-14 bears the Phosphoserine mark. The active-site Proton donor/acceptor is Glu-89. Residue Ser-118 is modified to Phosphoserine. Residues Tyr-132 and Tyr-133 each carry the phosphotyrosine modification. Ser-135 carries the phosphoserine modification. Thr-152 is subject to Phosphothreonine. 187–188 (GN) provides a ligand contact to substrate.

This sequence belongs to the phosphoglycerate mutase family. BPG-dependent PGAM subfamily. Homodimer. Interacts with ENO1. As to expression, expressed in the heart and muscle. Not found in the liver and brain.

The enzyme catalyses (2R)-2-phosphoglycerate = (2R)-3-phosphoglycerate. It catalyses the reaction (2R)-3-phospho-glyceroyl phosphate = (2R)-2,3-bisphosphoglycerate + H(+). Functionally, interconversion of 3- and 2-phosphoglycerate with 2,3-bisphosphoglycerate as the primer of the reaction. Can also catalyze the reaction of EC 5.4.2.4 (synthase), but with a reduced activity. This Homo sapiens (Human) protein is Phosphoglycerate mutase 2 (PGAM2).